A 430-amino-acid polypeptide reads, in one-letter code: Paraneoplastic antigen-like protein 8A (430 aa).

Over residues 219 to 228 (WKNTEDHGDP) the composition is skewed to basic and acidic residues. 3 disordered regions span residues 219 to 270 (WKNT…NSNY), 313 to 364 (DPSD…RKKK), and 392 to 430 (GLGA…SRKL). A compositionally biased stretch (basic residues) spans 232–250 (LVRRPGGKIRSRRRKQKKN). A compositionally biased stretch (polar residues) spans 261–270 (SQGSNYNSNY).

This sequence belongs to the PNMA family.

In Mus musculus (Mouse), this protein is Paraneoplastic antigen-like protein 8A.